The sequence spans 269 residues: Eukaryotic translation initiation factor 3 subunit G (269 aa).

Residues 140-181 (AIGGGDMSAQGGSGSGRYVPPSLRAGARDPSSNAYQDQRERD) are disordered. A compositionally biased stretch (gly residues) spans 141 to 154 (IGGGDMSAQGGSGS). Serine 161 is subject to Phosphoserine. One can recognise an RRM domain in the interval 184 to 263 (KTIRLTQVNE…FMLHAEWSKP (80 aa)).

This sequence belongs to the eIF-3 subunit G family. Component of the eukaryotic translation initiation factor 3 (eIF-3) complex.

Its subcellular location is the cytoplasm. Its function is as follows. RNA-binding component of the eukaryotic translation initiation factor 3 (eIF-3) complex, which is involved in protein synthesis of a specialized repertoire of mRNAs and, together with other initiation factors, stimulates binding of mRNA and methionyl-tRNAi to the 40S ribosome. The eIF-3 complex specifically targets and initiates translation of a subset of mRNAs involved in cell proliferation. This subunit can bind 18S rRNA. The protein is Eukaryotic translation initiation factor 3 subunit G of Kluyveromyces lactis (strain ATCC 8585 / CBS 2359 / DSM 70799 / NBRC 1267 / NRRL Y-1140 / WM37) (Yeast).